The primary structure comprises 215 residues: Adenylate kinase (215 aa).

Glycine 10–threonine 15 serves as a coordination point for ATP. Residues serine 30–valine 59 form an NMP region. AMP is bound by residues threonine 31, arginine 36, glutamine 57–valine 59, glycine 85–arginine 88, and glutamine 92. An LID region spans residues glycine 126–aspartate 163. Arginine 127 is a binding site for ATP. The Zn(2+) site is built by cysteine 130 and cysteine 133. Valine 136 to tyrosine 137 is a binding site for ATP. Zn(2+) is bound by residues cysteine 150 and cysteine 153. Residues arginine 160 and arginine 171 each contribute to the AMP site. Arginine 199 provides a ligand contact to ATP.

Belongs to the adenylate kinase family. As to quaternary structure, monomer.

The protein localises to the cytoplasm. It catalyses the reaction AMP + ATP = 2 ADP. It participates in purine metabolism; AMP biosynthesis via salvage pathway; AMP from ADP: step 1/1. Its function is as follows. Catalyzes the reversible transfer of the terminal phosphate group between ATP and AMP. Plays an important role in cellular energy homeostasis and in adenine nucleotide metabolism. The protein is Adenylate kinase of Syntrophomonas wolfei subsp. wolfei (strain DSM 2245B / Goettingen).